The primary structure comprises 187 residues: Calcium and integrin-binding family member 2 (187 aa).

3 EF-hand domains span residues 66 to 101 (RENP…LCES), 103 to 138 (PREL…LTKS), and 144 to 179 (EVVL…APDF). Residues D116, N118, D120, D127, D157, D159, D161, K163, and D168 each contribute to the Ca(2+) site.

As to quaternary structure, monomer. Homodimer. Interacts with WHRN and MYO7A. Interacts with ITGA2B (via C-terminus cytoplasmic tail region); this interaction is stabilized/increased in a calcium and magnesium-dependent manner. Interacts with ITGA7 (via C-terminus cytoplasmic tail region); this interaction is stabilized/increased in a calcium and magnesium-dependent manner. Interacts with TMC1. Interacts with TMC2. Interacts with PIEZO1. Expressed in inner and outer segments of photoreceptor cells, as well as in the pigmented epithelium. Also observed in the inner and outer plexiform layers and in the ganglion cell layer (at protein level). Expressed in sensory hair cell stereocilia, with expression mainly at the basal body of the kinocilium and in the hair bundle stereocilia; and the apical surface of hair cells (at protein level). Located in the tip region of the stereocilia and at the apical surface of hair cells around the cuticular plate (at protein level). Not expressed in the hair bundles of the vestibular hair cells. Strongly expressed in skeletal muscles, brain, kidney and liver. Expressed in the skeletal muscle, retina and cochlea. Expressed in megakaryocytes and endothelial cells. Expressed in heart, spleen, lung, and inner ear. In the inner ear, expressed in the vestibule, basilar membrane and spiral ganglion cells. Expressed in the supporting cells in both the organ of Corti and the vestibular sensory epithelia.

The protein localises to the cytoplasm. The protein resides in the cell projection. It localises to the stereocilium. It is found in the photoreceptor inner segment. Its subcellular location is the cilium. The protein localises to the photoreceptor outer segment. The protein resides in the cell membrane. It localises to the sarcolemma. In terms of biological role, calcium- and integrin-binding protein that plays a role in intracellular calcium homeostasis. Acts as an auxiliary subunit of the sensory mechanoelectrical transduction (MET) channel in hair cells. Essential for mechanoelectrical transduction (MET) currents in auditory hair cells and thereby required for hearing. Regulates the function of hair cell mechanotransduction by controlling the distribution of transmembrane channel-like proteins TMC1 and TMC2, and by regulating the function of the MET channels in hair cells. Required for the maintenance of auditory hair cell stereocilia bundle morphology and function and for hair-cell survival in the cochlea. Critical for proper photoreceptor cell maintenance and function. Plays a role in intracellular calcium homeostasis by decreasing ATP-induced calcium release. Seems to be dispensable for vestibular functions. The polypeptide is Calcium and integrin-binding family member 2 (Cib2) (Mus musculus (Mouse)).